A 376-amino-acid chain; its full sequence is Chaperone protein DnaJ (376 aa).

The region spanning 5–70 (DYYEVLGVAR…NKRRAYDAHG (66 aa)) is the J domain. Residues 132–209 (GIERRIEIPT…CHGAGRVEED (78 aa)) form a CR-type zinc finger. Zn(2+) contacts are provided by Cys145, Cys148, Cys161, Cys164, Cys183, Cys186, Cys197, and Cys200. CXXCXGXG motif repeat units follow at residues 145-152 (CEPCHGSG), 161-168 (CATCHGRG), 183-190 (CPHCDGRG), and 197-204 (CKTCHGAG).

This sequence belongs to the DnaJ family. Homodimer. It depends on Zn(2+) as a cofactor.

The protein localises to the cytoplasm. Functionally, participates actively in the response to hyperosmotic and heat shock by preventing the aggregation of stress-denatured proteins and by disaggregating proteins, also in an autonomous, DnaK-independent fashion. Unfolded proteins bind initially to DnaJ; upon interaction with the DnaJ-bound protein, DnaK hydrolyzes its bound ATP, resulting in the formation of a stable complex. GrpE releases ADP from DnaK; ATP binding to DnaK triggers the release of the substrate protein, thus completing the reaction cycle. Several rounds of ATP-dependent interactions between DnaJ, DnaK and GrpE are required for fully efficient folding. Also involved, together with DnaK and GrpE, in the DNA replication of plasmids through activation of initiation proteins. The protein is Chaperone protein DnaJ of Xanthomonas campestris pv. campestris (strain 8004).